Consider the following 358-residue polypeptide: CCAAT/enhancer-binding protein alpha (358 aa).

The interval 1 to 55 (MESADFYEAEPRPPMSSHLQSPPHAPSNAAFGFPRGAGPAPPPAPPAAPEPLGGI) is disordered. Residues 1–70 (MESADFYEAE…SIDISAYIDP (70 aa)) form a required to repress E2F1:TFDP1-mediated transcription, to inhibit cell cycle and to induce adipocyte differentiation region. Residues 29–38 (AAFGFPRGAG) show a composition bias toward low complexity. Positions 39-49 (PAPPPAPPAAP) are enriched in pro residues. Positions 54–72 (GICEHETSIDISAYIDPAA) are required for interaction with TRIB1. The required to induce adipocyte differentiation stretch occupies residues 126–200 (PPGYGCAAAG…HASPAHLAAP (75 aa)). Lysine 159 bears the N6-acetyllysine; alternate mark. Residue lysine 159 forms a Glycyl lysine isopeptide (Lys-Gly) (interchain with G-Cter in SUMO); alternate linkage. A Glycyl lysine isopeptide (Lys-Gly) (interchain with G-Cter in SUMO2); alternate cross-link involves residue lysine 159. Disordered regions lie at residues 176-195 (LFPYQPPPPPPPPHPHASPA) and 213-310 (TMHL…NVET). Residues 179–191 (YQPPPPPPPPHPH) show a composition bias toward pro residues. The tract at residues 180 to 194 (QPPPPPPPPHPHASP) is required to functionally cooperate with SREBF1 in promoter activation. The residue at position 193 (serine 193) is a Phosphoserine. Pro residues predominate over residues 220–234 (HPTPPPTPVPSPHPA). Phosphothreonine; by GSK3 is present on residues threonine 222 and threonine 226. Position 230 is a phosphoserine; by GSK3 (serine 230). An interaction with FOXO1 region spans residues 240–358 (AGLPGPGGSL…SLVKAMGNCA (119 aa)). The segment covering 261-271 (TGGGGGGGAGA) has biased composition (gly residues). Residues 276-292 (KSVDKNSNEYRVRRERN) show a composition bias toward basic and acidic residues. Residues 282-345 (SNEYRVRRER…DTLRGIFRQL (64 aa)) enclose the bZIP domain. The DNA-binding element occupies 285–300 (YRVRRERNNIAVRKSR). The interval 286–313 (RVRRERNNIAVRKSRDKAKQRNVETQQK) is basic motif. Residues 317 to 345 (LTSDNDRLRKRVEQLSRELDTLRGIFRQL) form a leucine-zipper region.

This sequence belongs to the bZIP family. C/EBP subfamily. Binds DNA as a homodimer and as a heterodimer. Can form stable heterodimers with CEBPB, CEBPD, CEBPE and CEBPG. Can form stable homodimers (also isoform 2 and isoform 3 dimers) and heterodimers with CEBPB (with isoform 2 and isoform 3) and CEBPG. Interacts with PRDM16. Interacts with UBN1. Interacts with ZNF638; this interaction increases transcriptional activation. Interacts with the complex TFDP2:E2F1; the interaction prevents CEBPA binding to target gene promoters and represses its transcriptional activity. Interacts with RB1. Interacts (when phosphorylated at Ser-193) with CDK2, CDK4, E2F4 and SMARCA2. Interacts with SREBPF1. Interacts with FOXO1 (via the Fork-head domain); the interaction increases when FOXO1 is deacetylated. Interacts with SIX1. Interacts (via recognition sequence) with TRIB1. In terms of assembly, interacts with TAF1A and UBTF. As to quaternary structure, interacts with NPM1. Sumoylated, sumoylation blocks the inhibitory effect on cell proliferation by disrupting the interaction with SMARCA2. Post-translationally, phosphorylation at Ser-193 is required for interaction with CDK2, CDK4 and SWI/SNF complex leading to cell cycle inhibition. Dephosphorylated at Ser-193 by protein phosphatase 2A (PP2A) through PI3K/AKT signaling pathway regulation. Phosphorylation at Thr-222 and Thr-226 by GSK3 is constitutive in adipose tissue and lung. In liver, both Thr-222 and Thr-226 are phosphorylated only during feeding but not during fasting. Phosphorylation of the GSK3 consensus sites selectively decreases transactivation activity on IRE-controlled promoters. In terms of processing, ubiquitinated by COP1 upon interaction with TRIB1. Isoform 2 and isoform 3 are expressed in liver (at protein level).

It localises to the nucleus. The protein resides in the nucleolus. Functionally, transcription factor that coordinates proliferation arrest and the differentiation of myeloid progenitors, adipocytes, hepatocytes, and cells of the lung and the placenta. Binds directly to the consensus DNA sequence 5'-T[TG]NNGNAA[TG]-3' acting as an activator on distinct target genes. During early embryogenesis, plays essential and redundant functions with CEBPB. Essential for the transition from common myeloid progenitors (CMP) to granulocyte/monocyte progenitors (GMP). Critical for the proper development of the liver and the lung. Necessary for terminal adipocyte differentiation, is required for postnatal maintenance of systemic energy homeostasis and lipid storage. To regulate these different processes at the proper moment and tissue, interplays with other transcription factors and modulators. Down-regulates the expression of genes that maintain cells in an undifferentiated and proliferative state through E2F1 repression, which is critical for its ability to induce adipocyte and granulocyte terminal differentiation. Reciprocally E2F1 blocks adipocyte differentiation by binding to specific promoters and repressing CEBPA binding to its target gene promoters. Proliferation arrest also depends on a functional binding to SWI/SNF complex. In liver, regulates gluconeogenesis and lipogenesis through different mechanisms. To regulate gluconeogenesis, functionally cooperates with FOXO1 binding to IRE-controlled promoters and regulating the expression of target genes such as PCK1 or G6PC1. To modulate lipogenesis, interacts and transcriptionally synergizes with SREBF1 in promoter activation of specific lipogenic target genes such as ACAS2. In adipose tissue, seems to act as FOXO1 coactivator accessing to ADIPOQ promoter through FOXO1 binding sites. In terms of biological role, can act as dominant-negative. Binds DNA and have transctivation activity, even if much less efficiently than isoform 2. Does not inhibit cell proliferation. Directly and specifically enhances ribosomal DNA transcription interacting with RNA polymerase I-specific cofactors and inducing histone acetylation. The chain is CCAAT/enhancer-binding protein alpha from Rattus norvegicus (Rat).